A 63-amino-acid polypeptide reads, in one-letter code: Cecropin-2 (63 aa).

The N-terminal stretch at 1-21 (MNFNKVLVLLAVIFAVFAGQT) is a signal peptide. The propeptide occupies 22 to 23 (EA). Lys-62 carries the lysine amide modification.

This sequence belongs to the cecropin family.

The protein resides in the secreted. Cecropins have lytic and antibacterial activity against several Gram-positive and Gram-negative bacteria. This Ceratitis capitata (Mediterranean fruit fly) protein is Cecropin-2 (CEC2).